The primary structure comprises 279 residues: Single-strand selective monofunctional uracil DNA glycosylase (279 aa).

Methionine 86, phenylalanine 100, and asparagine 165 together coordinate substrate. Positions 175–189 (SGRNLTPAELPAKQR) are DNA-binding. Residue histidine 241 coordinates substrate.

Belongs to the uracil-DNA glycosylase (UDG) superfamily. SMUG1 family.

It is found in the nucleus. Recognizes base lesions in the genome and initiates base excision DNA repair. Acts as a monofunctional DNA glycosylase specific for uracil (U) residues in DNA with a preference for single-stranded DNA substrates. The activity is greater toward mismatches (U/G) compared to matches (U/A). Excises uracil (U), 5-formyluracil (fU) and uracil derivatives bearing an oxidized group at C5 [5-hydroxyuracil (hoU) and 5-hydroxymethyluracil (hmU)] in ssDNA and dsDNA, but not analogous cytosine derivatives (5-hydroxycytosine and 5-formylcytosine), nor other oxidized bases. The activity is damage-specific and salt-dependent. The substrate preference is the following: ssDNA &gt; dsDNA (G pair) = dsDNA (A pair) at low salt concentration, and dsDNA (G pair) &gt; dsDNA (A pair) &gt; ssDNA at high salt concentration. In Mus musculus (Mouse), this protein is Single-strand selective monofunctional uracil DNA glycosylase (Smug1).